The chain runs to 274 residues: Large ribosomal subunit protein uL2cz/uL2cy (274 aa).

Disordered stretches follow at residues 1–22 (MAIH…DSQV) and 225–274 (PVDH…RRSK).

The protein belongs to the universal ribosomal protein uL2 family. Part of the 50S ribosomal subunit.

It is found in the plastid. The protein localises to the chloroplast. This Nasturtium officinale (Watercress) protein is Large ribosomal subunit protein uL2cz/uL2cy (rpl2-A).